We begin with the raw amino-acid sequence, 622 residues long: Chaperone protein DnaK (622 aa).

The residue at position 197 (threonine 197) is a Phosphothreonine; by autocatalysis. 2 stretches are compositionally biased toward basic and acidic residues: residues 515-528 and 575-614; these read LHKE…EAVE and ASKE…KKDD. Disordered stretches follow at residues 515-537 and 575-622; these read LHKE…DSLV and ASKE…AEVE.

Belongs to the heat shock protein 70 family.

Its function is as follows. Acts as a chaperone. This Campylobacter lari (strain RM2100 / D67 / ATCC BAA-1060) protein is Chaperone protein DnaK.